A 365-amino-acid polypeptide reads, in one-letter code: 2-aminoethylphosphonate--pyruvate transaminase (365 aa).

An N6-(pyridoxal phosphate)lysine modification is found at Lys194.

It belongs to the class-V pyridoxal-phosphate-dependent aminotransferase family. PhnW subfamily. Homodimer. It depends on pyridoxal 5'-phosphate as a cofactor.

The enzyme catalyses (2-aminoethyl)phosphonate + pyruvate = phosphonoacetaldehyde + L-alanine. Its function is as follows. Involved in phosphonate degradation. The chain is 2-aminoethylphosphonate--pyruvate transaminase from Bacillus cereus (strain G9842).